The following is a 348-amino-acid chain: Alcohol dehydrogenase 1 (348 aa).

Ser2 carries the post-translational modification N-acetylserine. Cys44 contacts Zn(2+). Residues His45, Thr46, and His49 each coordinate NAD(+). Zn(2+) contacts are provided by His67, Glu68, Cys98, Cys101, Cys104, Cys112, and Cys154. The NAD(+) site is built by Gly181, Gly182, Leu183, Asp202, and Lys207. Ser213 bears the Phosphoserine mark. Position 222 (Phe222) interacts with NAD(+). Thr223 is subject to Phosphothreonine. Glycyl lysine isopeptide (Lys-Gly) (interchain with G-Cter in ubiquitin) cross-links involve residues Lys226 and Lys234. NAD(+) contacts are provided by Val269 and Met271. A Phosphoserine modification is found at Ser279. Residue Lys287 forms a Glycyl lysine isopeptide (Lys-Gly) (interchain with G-Cter in ubiquitin) linkage. Ser294 and Val296 together coordinate NAD(+). Residue Ser316 is modified to Phosphoserine. Lys319 participates in a covalent cross-link: Glycyl lysine isopeptide (Lys-Gly) (interchain with G-Cter in ubiquitin). Arg341 provides a ligand contact to NAD(+).

It belongs to the zinc-containing alcohol dehydrogenase family. In terms of assembly, homotetramer. Zn(2+) serves as cofactor.

Its subcellular location is the cytoplasm. The catalysed reaction is a primary alcohol + NAD(+) = an aldehyde + NADH + H(+). It carries out the reaction a secondary alcohol + NAD(+) = a ketone + NADH + H(+). It catalyses the reaction ethanol + NAD(+) = acetaldehyde + NADH + H(+). The enzyme catalyses allyl alcohol + NADP(+) = acrolein + NADPH + H(+). The catalysed reaction is 1-propanol + NAD(+) = propanal + NADH + H(+). It carries out the reaction butan-1-ol + NAD(+) = butanal + NADH + H(+). It catalyses the reaction hexan-1-ol + NAD(+) = hexanal + NADH + H(+). The enzyme catalyses (R)-lactaldehyde + NAD(+) = methylglyoxal + NADH + H(+). The catalysed reaction is octan-1-ol + NAD(+) = octanal + NADH + H(+). It carries out the reaction butan-2-ol + NAD(+) = butan-2-one + NADH + H(+). It catalyses the reaction propan-2-ol + NAD(+) = acetone + NADH + H(+). The enzyme catalyses isobutanol + NAD(+) = 2-methylpropanal + NADH + H(+). Functionally, preferentially fermentative isozyme that reduces acetaldehyde to ethanol during the fermentation of glucose. Major enzyme required for the conversion of acetaldehyde to ethanol. Plays a key role in the carbohydrate metabolism through the regeneration of NAD(+) from glycolytic NADH. In the reverse reaction, preferentially catalyzes the conversion of primary unbranched alcohols to their corresponding aldehydes. Also shows activity toward secondary alcohols. Most active with ethanol, and its activity decreases as the size of the alcohol is increased. This Saccharomyces cerevisiae (strain ATCC 204508 / S288c) (Baker's yeast) protein is Alcohol dehydrogenase 1 (ADH1).